A 142-amino-acid polypeptide reads, in one-letter code: Large ribosomal subunit protein uL13 (142 aa).

Belongs to the universal ribosomal protein uL13 family. In terms of assembly, part of the 50S ribosomal subunit.

In terms of biological role, this protein is one of the early assembly proteins of the 50S ribosomal subunit, although it is not seen to bind rRNA by itself. It is important during the early stages of 50S assembly. This is Large ribosomal subunit protein uL13 from Agathobacter rectalis (strain ATCC 33656 / DSM 3377 / JCM 17463 / KCTC 5835 / VPI 0990) (Eubacterium rectale).